A 575-amino-acid polypeptide reads, in one-letter code: Proline--tRNA ligase (575 aa).

It belongs to the class-II aminoacyl-tRNA synthetase family. ProS type 1 subfamily. In terms of assembly, homodimer.

Its subcellular location is the cytoplasm. The catalysed reaction is tRNA(Pro) + L-proline + ATP = L-prolyl-tRNA(Pro) + AMP + diphosphate. Its function is as follows. Catalyzes the attachment of proline to tRNA(Pro) in a two-step reaction: proline is first activated by ATP to form Pro-AMP and then transferred to the acceptor end of tRNA(Pro). As ProRS can inadvertently accommodate and process non-cognate amino acids such as alanine and cysteine, to avoid such errors it has two additional distinct editing activities against alanine. One activity is designated as 'pretransfer' editing and involves the tRNA(Pro)-independent hydrolysis of activated Ala-AMP. The other activity is designated 'posttransfer' editing and involves deacylation of mischarged Ala-tRNA(Pro). The misacylated Cys-tRNA(Pro) is not edited by ProRS. The chain is Proline--tRNA ligase from Pseudothermotoga lettingae (strain ATCC BAA-301 / DSM 14385 / NBRC 107922 / TMO) (Thermotoga lettingae).